The chain runs to 120 residues: Large ribosomal subunit protein uL18 (120 aa).

Belongs to the universal ribosomal protein uL18 family. As to quaternary structure, part of the 50S ribosomal subunit; part of the 5S rRNA/L5/L18/L25 subcomplex. Contacts the 5S and 23S rRNAs.

In terms of biological role, this is one of the proteins that bind and probably mediate the attachment of the 5S RNA into the large ribosomal subunit, where it forms part of the central protuberance. The protein is Large ribosomal subunit protein uL18 of Methylocella silvestris (strain DSM 15510 / CIP 108128 / LMG 27833 / NCIMB 13906 / BL2).